A 148-amino-acid polypeptide reads, in one-letter code: Photosystem I reaction center subunit XI (148 aa).

3 consecutive transmembrane segments (helical) span residues 48–68, 73–93, and 122–142; these read LEIG…LGPL, IGLL…TLGL, and GGFF…LSSI.

Belongs to the PsaL family.

It is found in the plastid. The protein localises to the chloroplast thylakoid membrane. This Thalassiosira pseudonana (Marine diatom) protein is Photosystem I reaction center subunit XI.